We begin with the raw amino-acid sequence, 437 residues long: Homogentisate 1,2-dioxygenase (437 aa).

H295 functions as the Proton acceptor in the catalytic mechanism. The Fe cation site is built by H338 and E344. Residues Y353 and H374 each contribute to the homogentisate site. H374 contacts Fe cation.

This sequence belongs to the homogentisate dioxygenase family. As to quaternary structure, hexamer; dimer of trimers. The cofactor is Fe cation.

The enzyme catalyses homogentisate + O2 = 4-maleylacetoacetate + H(+). It participates in amino-acid degradation; L-phenylalanine degradation; acetoacetate and fumarate from L-phenylalanine: step 4/6. In terms of biological role, involved in the catabolism of homogentisate (2,5-dihydroxyphenylacetate or 2,5-OH-PhAc), a central intermediate in the degradation of phenylalanine and tyrosine. Catalyzes the oxidative ring cleavage of the aromatic ring of homogentisate to yield maleylacetoacetate. This Myxococcus xanthus (strain DK1622) protein is Homogentisate 1,2-dioxygenase.